Reading from the N-terminus, the 822-residue chain is Fibroblast growth factor receptor 1 (822 aa).

A signal peptide spans 1–21; the sequence is MWGWRGLLFWAVLVTATLCTA. Over 22–376 the chain is Extracellular; the sequence is RPAPTLPEQA…AVMTSPLYLE (355 aa). The Ig-like C2-type 1 domain maps to 25 to 119; it reads PTLPEQAQPW…DTTYFSVNVS (95 aa). A disulfide bond links Cys55 and Cys101. Asn77 and Asn117 each carry an N-linked (GlcNAc...) asparagine glycan. Positions 120-162 are disordered; it reads DALPSSEDDDDDDDSSSEEKETDNTKPNRRPVAPYWTSPEKME. Residues 125 to 135 show a composition bias toward acidic residues; that stretch reads SEDDDDDDDSS. Basic and acidic residues predominate over residues 136–145; it reads SEEKETDNTK. Ig-like C2-type domains lie at 158–246 and 255–357; these read PEKM…YQLD and PILQ…AWLT. The tract at residues 160-177 is heparin-binding; that stretch reads KMEKKLHAVPAAKTVKFK. Residues Cys178 and Cys230 are joined by a disulfide bond. Asn227, Asn240, Asn264, Asn296, Asn317, and Asn330 each carry an N-linked (GlcNAc...) asparagine glycan. A disulfide bond links Cys277 and Cys341. A helical membrane pass occupies residues 377-397; the sequence is IIIYCTGAFLISCMVGSVIIY. At 398–822 the chain is on the cytoplasmic side; that stretch reads KMKSGTKKSD…QLANGGLNRR (425 aa). Tyr463 carries the phosphotyrosine; by autocatalysis modification. Residues 478–767 form the Protein kinase domain; that stretch reads LVLGKPLGEG…VALTSNQEYL (290 aa). ATP is bound by residues 484–490, Lys514, 562–564, and Asn568; these read LGEGCFG and EYA. A phosphotyrosine; by autocatalysis mark is found at Tyr583 and Tyr585. The active-site Proton acceptor is Asp623. Arg627 and Asp641 together coordinate ATP. A phosphotyrosine; by autocatalysis mark is found at Tyr653, Tyr654, Tyr730, and Tyr766. Positions 770 to 822 are disordered; sequence SMPLDQDSPSFPDTRSSTCSSGEDSVFSHEPFPEEPCLPRHPTQLANGGLNRR. Residues 776-792 show a composition bias toward polar residues; that stretch reads DSPSFPDTRSSTCSSGE.

This sequence belongs to the protein kinase superfamily. Tyr protein kinase family. Fibroblast growth factor receptor subfamily. In terms of assembly, monomer. Homodimer after ligand binding. Interacts predominantly with FGF1 and FGF2, but can also interact with FGF3, FGF4, FGF5, FGF6, FGF8, FGF10, FGF19, FGF21, FGF22 and FGF23 (in vitro). Ligand specificity is determined by tissue-specific expression of isoforms, and differences in the third Ig-like domain are crucial for ligand specificity. Affinity for fibroblast growth factors (FGFs) is increased by heparan sulfate glycosaminoglycans that function as coreceptors. Likewise, KLB increases the affinity for FGF19, FGF21 and FGF23. Interacts (phosphorylated on Tyr-766) with PLCG1 (via SH2 domains). Interacts with FRS2. Interacts (via C-terminus) with NEDD4 (via WW3 domain). Interacts with RPS6KA1. Interacts with KL. Interacts with SHB (via SH2 domain) and GRB10. Interacts with ANOS1; this interaction does not interfere with FGF2-binding to FGFR1, but prevents binding of heparin-bound FGF2. Interacts with SOX2 and SOX3. Interacts with FLRT1, FLRT2 and FLRT3. Found in a ternary complex with FGF1 and ITGAV:ITGB3. Autophosphorylated. Binding of FGF family members together with heparan sulfate proteoglycan or heparin promotes receptor dimerization and autophosphorylation on tyrosine residues. Autophosphorylation occurs in trans between the two FGFR molecules present in the dimer and proceeds in a highly ordered manner. Initial autophosphorylation at Tyr-653 increases the kinase activity by a factor of 50 to 100. After this, Tyr-583 becomes phosphorylated, followed by phosphorylation of Tyr-463, Tyr-766, Tyr-583 and Tyr-585. In a third stage, Tyr-654 is autophosphorylated, resulting in a further tenfold increase of kinase activity. Phosphotyrosine residues provide docking sites for interacting proteins and so are crucial for FGFR1 function and its regulation. Post-translationally, ubiquitinated. FGFR1 is rapidly ubiquitinated by NEDD4 after autophosphorylation, leading to internalization and lysosomal degradation. CBL is recruited to activated FGFR1 via FRS2 and GRB2, and mediates ubiquitination and subsequent degradation of FGFR1. In terms of processing, N-glycosylated in the endoplasmic reticulum. The N-glycan chains undergo further maturation to an Endo H-resistant form in the Golgi apparatus. In terms of tissue distribution, expressed in the parathyroid.

It localises to the cell membrane. The protein resides in the nucleus. The protein localises to the cytoplasm. Its subcellular location is the cytosol. It is found in the cytoplasmic vesicle. It catalyses the reaction L-tyrosyl-[protein] + ATP = O-phospho-L-tyrosyl-[protein] + ADP + H(+). Present in an inactive conformation in the absence of bound ligand. Ligand binding leads to dimerization and activation by sequential autophosphorylation on tyrosine residues. Its function is as follows. Tyrosine-protein kinase that acts as a cell-surface receptor for fibroblast growth factors and plays an essential role in the regulation of embryonic development, cell proliferation, differentiation and migration. Required for normal mesoderm patterning and correct axial organization during embryonic development, normal skeletogenesis and normal development of the gonadotropin-releasing hormone (GnRH) neuronal system. Phosphorylates PLCG1, FRS2, GAB1 and SHB. Ligand binding leads to the activation of several signaling cascades. Activation of PLCG1 leads to the production of the cellular signaling molecules diacylglycerol and inositol 1,4,5-trisphosphate. Phosphorylation of FRS2 triggers recruitment of GRB2, GAB1, PIK3R1 and SOS1, and mediates activation of RAS, MAPK1/ERK2, MAPK3/ERK1 and the MAP kinase signaling pathway, as well as of the AKT1 signaling pathway. Promotes phosphorylation of SHC1, STAT1 and PTPN11/SHP2. In the nucleus, enhances RPS6KA1 and CREB1 activity and contributes to the regulation of transcription. FGFR1 signaling is down-regulated by IL17RD/SEF, and by FGFR1 ubiquitination, internalization and degradation. This is Fibroblast growth factor receptor 1 (Fgfr1) from Rattus norvegicus (Rat).